The chain runs to 368 residues: Seipin-1 (368 aa).

3 helical membrane passes run tryptophan 26 to serine 46, valine 101 to valine 121, and leucine 292 to phenylalanine 312. Residues methionine 344–threonine 368 are disordered. Basic residues predominate over residues arginine 346–asparagine 359.

The protein belongs to the seipin family. Expressed in seeds and young seedlings. Not detected in leaves.

The protein localises to the endoplasmic reticulum membrane. Involved in lipid metabolism and lipid droplet (LD) morphology, number, and size. Facilitates the formation of large-sized LDs and modulates triacylglycerol accumulation. Induces probably a reorganization of the endoplasmic reticulum into LD-forming domains. This is Seipin-1 from Arabidopsis thaliana (Mouse-ear cress).